A 60-amino-acid polypeptide reads, in one-letter code: Ixodegrin-like peptide (60 aa).

Positions 1 to 21 (MNAAFIAALLILGALTLDAMA) are cleaved as a signal peptide. A Cell attachment site motif is present at residues 49 to 51 (RGD).

This sequence belongs to the ixodegrin family. Contains 3 disulfide bonds. Expressed in salivary glands.

The protein resides in the secreted. Functionally, tick salivary platelet aggregation inhibitor that plays an important part in the anti-hemostatic strategy of ticks. Inhibits platelet aggregation induced by ADP, thrombin and thromboxane A2 (TXA2). Blocks platelet adhesion to soluble collagen (most probably through the binding to alpha-2/beta-1 integrin (ITGA2/ITGB1)) and binds to purified glycoprotein IIb/IIIa (ITGA2B/ITGB3) in a dose-dependent manner. In vivo, reduces thrombus weight effectively in a rat arteriovenous shunt model and inhibits thrombosis in a carrageenan-induced mouse tail thrombosis model. This Ixodes scapularis (Black-legged tick) protein is Ixodegrin-like peptide.